Consider the following 109-residue polypeptide: Oncomodulin (109 aa).

Residue Ser2 is modified to N-acetylserine. EF-hand domains lie at 39 to 74 and 78 to 109; these read MSASQLKDIFQFIDNDQSGYLDEDELKYFLQRFQSD and LTESETKSLMDAADNDGDGKIGADEFQEMVHS. 10 residues coordinate Ca(2+): Asp52, Asp54, Ser56, Tyr58, Glu63, Asp91, Asp93, Asp95, Lys97, and Glu102. Residues 82–109 form a disordered region; it reads ETKSLMDAADNDGDGKIGADEFQEMVHS. Residues 94 to 109 show a composition bias toward basic and acidic residues; sequence GDGKIGADEFQEMVHS.

It belongs to the parvalbumin family. In terms of tissue distribution, found in tumor tissues and not detected in normal tissues.

Its function is as follows. Has some calmodulin-like activity with respect to enzyme activation and growth regulation. Binds two calcium ions. The sequence is that of Oncomodulin (Ocm) from Mus musculus (Mouse).